Consider the following 289-residue polypeptide: 3-hydroxy-16-methoxy-2,3-dihydrotabersonine N-methyltransferase (289 aa).

Residues 71 to 80 (MLDVGSGLGG) form an SAM motif I region. The segment at 134–142 (GKFDVVFTI) is SAM motif II. Positions 161 to 170 (VAAPGAAIII) are SAM motif III. The Microbody targeting signal signature appears at 287 to 289 (KSI).

Belongs to the class I-like SAM-binding methyltransferase superfamily. gTMT family. Homodimer. In terms of tissue distribution, mainly expressed in young leaves, and, to a lower extent, in mature leaves, flowers, stems and roots (at protein level).

Its subcellular location is the thylakoid. It is found in the peroxisome. It carries out the reaction (3R)-3-hydroxy-16-methoxy-2,3-dihydrotabersonine + S-adenosyl-L-methionine = deacetoxyvindoline + S-adenosyl-L-homocysteine + H(+). It participates in alkaloid biosynthesis; vindoline biosynthesis. With respect to regulation, inhibited by gamma-tocopherol. S-adenosyl-L-methionine-dependent N-methyltransferase that catalyzes a nitrogen methylation involved in vindoline biosynthesis. Displays a strict requirement for a 2,3-dihydro bond in the aspidosperma skeleton. Can use 2,3-dihydrotabersonine, 2,3-dihydro-3-hydroxytabersonine and 2,3,6,7-tetraydro-3-hydroxytabersonine as substrates, but not tabersonine, vincadifformine, 21-hydroxycyclolochnericine, tryptamine, norharmane, harmaline, catharanthine, norajmaline, ajmaline, serpentine, ajmalicine, yohimbine or gamma-tocopherol. Inactive with picrinine as substrate. The chain is 3-hydroxy-16-methoxy-2,3-dihydrotabersonine N-methyltransferase from Catharanthus roseus (Madagascar periwinkle).